Here is a 25-residue protein sequence, read N- to C-terminus: Pregnancy-associated glycoprotein 74 (25 aa).

N4 and N21 each carry an N-linked (GlcNAc...) asparagine glycan.

The protein belongs to the peptidase A1 family. Post-translationally, N-glycosylated. Placental cotyledons.

The protein resides in the secreted. Its subcellular location is the extracellular space. The chain is Pregnancy-associated glycoprotein 74 from Bison bison (American bison).